The following is a 794-amino-acid chain: Cadherin-12 (794 aa).

Residues 1–23 (MLTRNCLSLLLWVLFDGGLLTPL) form the signal peptide. Residues 24 to 54 (QPQPQQTLATEPRENVIHLPGQRSHFQRVKR) constitute a propeptide that is removed on maturation. Cadherin domains follow at residues 55 to 160 (GWVW…EPKF), 161 to 269 (LDGP…PPRF), 270 to 384 (PKSI…PPVF), 385 to 487 (SKPL…EFPP), and 488 to 609 (EISV…IFLP). Residues 55–609 (GWVWNQFFVL…SCNVEAIFLP (555 aa)) lie on the Extracellular side of the membrane. Asparagine 256 carries N-linked (GlcNAc...) asparagine glycosylation. Asparagine 456, asparagine 537, and asparagine 545 each carry an N-linked (GlcNAc...) asparagine glycan. Residues 610 to 637 (VGLSTGALIAILLCIVILLAIVVLYVAL) traverse the membrane as a helical segment. At 638-794 (RRQKKKDTLM…EESYNPDKVT (157 aa)) the chain is on the cytoplasmic side. Residue serine 787 is modified to Phosphoserine.

Brain.

It is found in the cell membrane. In terms of biological role, cadherins are calcium-dependent cell adhesion proteins. They preferentially interact with themselves in a homophilic manner in connecting cells; cadherins may thus contribute to the sorting of heterogeneous cell types. In Homo sapiens (Human), this protein is Cadherin-12 (CDH12).